The following is a 251-amino-acid chain: Imidazole glycerol phosphate synthase subunit HisF (251 aa).

Catalysis depends on residues D11 and D130.

It belongs to the HisA/HisF family. Heterodimer of HisH and HisF.

It is found in the cytoplasm. The catalysed reaction is 5-[(5-phospho-1-deoxy-D-ribulos-1-ylimino)methylamino]-1-(5-phospho-beta-D-ribosyl)imidazole-4-carboxamide + L-glutamine = D-erythro-1-(imidazol-4-yl)glycerol 3-phosphate + 5-amino-1-(5-phospho-beta-D-ribosyl)imidazole-4-carboxamide + L-glutamate + H(+). It participates in amino-acid biosynthesis; L-histidine biosynthesis; L-histidine from 5-phospho-alpha-D-ribose 1-diphosphate: step 5/9. Its function is as follows. IGPS catalyzes the conversion of PRFAR and glutamine to IGP, AICAR and glutamate. The HisF subunit catalyzes the cyclization activity that produces IGP and AICAR from PRFAR using the ammonia provided by the HisH subunit. The sequence is that of Imidazole glycerol phosphate synthase subunit HisF from Flavobacterium psychrophilum (strain ATCC 49511 / DSM 21280 / CIP 103535 / JIP02/86).